We begin with the raw amino-acid sequence, 150 residues long: Ribonuclease H (150 aa).

Residues 1–141 (MKFIEVHTDG…VDVLARNQAI (141 aa)) enclose the RNase H type-1 domain. Mg(2+) contacts are provided by Asp-9, Glu-47, Asp-69, and Asp-133.

The protein belongs to the RNase H family. As to quaternary structure, monomer. The cofactor is Mg(2+).

The protein localises to the cytoplasm. It catalyses the reaction Endonucleolytic cleavage to 5'-phosphomonoester.. Functionally, endonuclease that specifically degrades the RNA of RNA-DNA hybrids. The polypeptide is Ribonuclease H (Xanthomonas euvesicatoria pv. vesicatoria (strain 85-10) (Xanthomonas campestris pv. vesicatoria)).